The primary structure comprises 139 residues: Acidic phospholipase A2 BpPLA2-TXI (139 aa).

An N-terminal signal peptide occupies residues 1 to 16; that stretch reads MRTLWIMAVLLVGVEG. Cysteine 44 and cysteine 60 are joined by a disulfide. Residues glycine 45 and glycine 47 each contribute to the Ca(2+) site. Histidine 63 is an active-site residue. Aspartate 64 is a binding site for Ca(2+). Disulfide bonds link cysteine 65/cysteine 139, cysteine 73/cysteine 97, and cysteine 91/cysteine 102.

It belongs to the phospholipase A2 family. Group II subfamily. D49 sub-subfamily. It depends on Ca(2+) as a cofactor. In terms of tissue distribution, expressed by the venom gland.

It is found in the secreted. The catalysed reaction is a 1,2-diacyl-sn-glycero-3-phosphocholine + H2O = a 1-acyl-sn-glycero-3-phosphocholine + a fatty acid + H(+). PLA2 catalyzes the calcium-dependent hydrolysis of the 2-acyl groups in 3-sn-phosphoglycerides. The sequence is that of Acidic phospholipase A2 BpPLA2-TXI from Bothrops pauloensis (Neuwied's lancehead).